The sequence spans 690 residues: Polyribonucleotide nucleotidyltransferase (690 aa).

Positions 482 and 488 each coordinate Mg(2+). In terms of domain architecture, KH spans 549–608; that stretch reads PRIITIQINPDRIRDVIGPGGKVIRALTEETGATIDIQDNGTVTIASVDGEAGAAAKRRI. The S1 motif domain maps to 618–686; the sequence is DTIYDGKVAK…RQGKIKLSMK (69 aa).

The protein belongs to the polyribonucleotide nucleotidyltransferase family. In terms of assembly, component of the RNA degradosome, which is a multiprotein complex involved in RNA processing and mRNA degradation. It depends on Mg(2+) as a cofactor.

The protein resides in the cytoplasm. It catalyses the reaction RNA(n+1) + phosphate = RNA(n) + a ribonucleoside 5'-diphosphate. Its function is as follows. Involved in mRNA degradation. Catalyzes the phosphorolysis of single-stranded polyribonucleotides processively in the 3'- to 5'-direction. The polypeptide is Polyribonucleotide nucleotidyltransferase (Acidithiobacillus ferrooxidans (strain ATCC 23270 / DSM 14882 / CIP 104768 / NCIMB 8455) (Ferrobacillus ferrooxidans (strain ATCC 23270))).